A 375-amino-acid chain; its full sequence is Chaperone protein DnaJ (375 aa).

The region spanning Asp5–Gly70 is the J domain. The CR-type zinc finger occupies Gly134–Tyr212. Zn(2+)-binding residues include Cys147, Cys150, Cys164, Cys167, Cys186, Cys189, Cys200, and Cys203. 4 CXXCXGXG motif repeats span residues Cys147–Gly154, Cys164–Gly171, Cys186–Gly193, and Cys200–Gly207.

Belongs to the DnaJ family. As to quaternary structure, homodimer. It depends on Zn(2+) as a cofactor.

Its subcellular location is the cytoplasm. Functionally, participates actively in the response to hyperosmotic and heat shock by preventing the aggregation of stress-denatured proteins and by disaggregating proteins, also in an autonomous, DnaK-independent fashion. Unfolded proteins bind initially to DnaJ; upon interaction with the DnaJ-bound protein, DnaK hydrolyzes its bound ATP, resulting in the formation of a stable complex. GrpE releases ADP from DnaK; ATP binding to DnaK triggers the release of the substrate protein, thus completing the reaction cycle. Several rounds of ATP-dependent interactions between DnaJ, DnaK and GrpE are required for fully efficient folding. Also involved, together with DnaK and GrpE, in the DNA replication of plasmids through activation of initiation proteins. This chain is Chaperone protein DnaJ, found in Pseudomonas putida (strain ATCC 47054 / DSM 6125 / CFBP 8728 / NCIMB 11950 / KT2440).